A 433-amino-acid chain; its full sequence is Serine hydroxymethyltransferase (433 aa).

121-123 serves as a coordination point for (6S)-5,6,7,8-tetrahydrofolate; it reads AHV. The residue at position 227 (lysine 227) is an N6-(pyridoxal phosphate)lysine. Glutamate 243 is a binding site for (6S)-5,6,7,8-tetrahydrofolate.

It belongs to the SHMT family. In terms of assembly, homodimer. Pyridoxal 5'-phosphate is required as a cofactor.

It is found in the cytoplasm. It participates in amino-acid biosynthesis; glycine biosynthesis; glycine from L-serine: step 1/1. Catalyzes the reversible interconversion of serine and glycine with a modified folate serving as the one-carbon carrier. Also exhibits a pteridine-independent aldolase activity toward beta-hydroxyamino acids, producing glycine and aldehydes, via a retro-aldol mechanism. In Saccharolobus islandicus (strain Y.N.15.51 / Yellowstone #2) (Sulfolobus islandicus), this protein is Serine hydroxymethyltransferase.